Here is a 96-residue protein sequence, read N- to C-terminus: MKFRPLHDRVVVRRIESEEKTKGGIIIPDTAKEKPQEGEVVAVGPGARDEQGRVNALDVKAGDRVLFGKWSGTEVKIDGQDLLIMKESDIMGVVAL.

This sequence belongs to the GroES chaperonin family. Heptamer of 7 subunits arranged in a ring. Interacts with the chaperonin GroEL.

The protein localises to the cytoplasm. Its function is as follows. Together with the chaperonin GroEL, plays an essential role in assisting protein folding. The GroEL-GroES system forms a nano-cage that allows encapsulation of the non-native substrate proteins and provides a physical environment optimized to promote and accelerate protein folding. GroES binds to the apical surface of the GroEL ring, thereby capping the opening of the GroEL channel. In Methylobacterium radiotolerans (strain ATCC 27329 / DSM 1819 / JCM 2831 / NBRC 15690 / NCIMB 10815 / 0-1), this protein is Co-chaperonin GroES.